Consider the following 603-residue polypeptide: MKISDKLLHPDWKEKVTYSYEFFPPKTSTGVQNLYNRIDRMKTWGRPMFVDVTWGAGGTSSELTPGIVNVIQTDFEVDTCMHLTCTNMSTEMIDAALKRAHETGCRNILALRGDPVKDTDWTEGESGFRYASDLVRYIRTHYNDEFCIGVAGYPEGYSPDDDIDESIKHLKLKVDEGADFIVTQMFYDVDNFIAWVDKVRAAGINIPIFPGIMPIQAWDSFIRRAKWSGVKIPQHFMDTLVPVKDDDEGVRERGVELIVEMCRKLIASGITRLHFYTMNLEKAVKMIIERLGLLDENLAPIVDTNNVELTNASSQDRRINEGVRPIFWRTRNESYVSRTDQWDELPHGRWGDSRSPAFGEFDAIRYGLRMSPKEITTSWGSPKSYSEIGDLFARYCEKKISSLPWSDLPISDEADLIRDQLLSMNRNAFLTINSQPALNGEKSSHPVFGWGPPNGYVFQKPYVEFFVHPSLLNELKETVKKLNSVSYFVTNKNGDLDTNSQYEIPNAVTWGVFPNREIIQPTIVESTSFLAWKDEAYSLGMEWANAYSPDSISRKLLVSMMKEWFLCVIVDNDFQNGQSLFDVFNKMRSLKDIHPELYYANAS.

Glu21 (proton donor/acceptor) is an active-site residue. NAD(+)-binding positions include 21–26 and 53–54; these read EFFPPK and TW. FAD is bound by residues 53-54, His82, 112-114, 130-131, Tyr153, and Lys173; these read TW, RGD, and YA. Residue Asp114 coordinates substrate. Residues Gln184 and Tyr276 each coordinate substrate. Phosphoserine is present on Ser355.

This sequence belongs to the methylenetetrahydrofolate reductase family. FAD is required as a cofactor.

It catalyses the reaction (6S)-5-methyl-5,6,7,8-tetrahydrofolate + NADP(+) = (6R)-5,10-methylene-5,6,7,8-tetrahydrofolate + NADPH + H(+). The enzyme catalyses (6S)-5-methyl-5,6,7,8-tetrahydrofolate + NAD(+) = (6R)-5,10-methylene-5,6,7,8-tetrahydrofolate + NADH + H(+). It participates in one-carbon metabolism; tetrahydrofolate interconversion. Functionally, major methylenetetrahydrofolate reductase required to generate the methyl groups necessary for methionine synthetase to convert homocysteine to methionine. Performs 80 to 85 percent of the total methylenetetrahydrofolate reductase activity of the cells. This Schizosaccharomyces pombe (strain 972 / ATCC 24843) (Fission yeast) protein is Methylenetetrahydrofolate reductase 1 (met9).